A 393-amino-acid polypeptide reads, in one-letter code: Dual-specificity RNA methyltransferase RlmN (393 aa).

A disordered region spans residues 1 to 22 (MSEQLLSELSPVAATSPSPAPA). The segment covering 10–22 (SPVAATSPSPAPA) has biased composition (low complexity). Glutamate 114 serves as the catalytic Proton acceptor. The 239-residue stretch at 120–358 (EDDRATLCVS…TTIVRKTRGD (239 aa)) folds into the Radical SAM core domain. Cysteine 127 and cysteine 364 are disulfide-bonded. Cysteine 134, cysteine 138, and cysteine 141 together coordinate [4Fe-4S] cluster. S-adenosyl-L-methionine contacts are provided by residues 188–189 (GE), serine 220, 242–244 (SLH), and asparagine 321. The active-site S-methylcysteine intermediate is the cysteine 364.

This sequence belongs to the radical SAM superfamily. RlmN family. The cofactor is [4Fe-4S] cluster.

It localises to the cytoplasm. The enzyme catalyses adenosine(2503) in 23S rRNA + 2 reduced [2Fe-2S]-[ferredoxin] + 2 S-adenosyl-L-methionine = 2-methyladenosine(2503) in 23S rRNA + 5'-deoxyadenosine + L-methionine + 2 oxidized [2Fe-2S]-[ferredoxin] + S-adenosyl-L-homocysteine. It catalyses the reaction adenosine(37) in tRNA + 2 reduced [2Fe-2S]-[ferredoxin] + 2 S-adenosyl-L-methionine = 2-methyladenosine(37) in tRNA + 5'-deoxyadenosine + L-methionine + 2 oxidized [2Fe-2S]-[ferredoxin] + S-adenosyl-L-homocysteine. Functionally, specifically methylates position 2 of adenine 2503 in 23S rRNA and position 2 of adenine 37 in tRNAs. m2A2503 modification seems to play a crucial role in the proofreading step occurring at the peptidyl transferase center and thus would serve to optimize ribosomal fidelity. This Sodalis glossinidius (strain morsitans) protein is Dual-specificity RNA methyltransferase RlmN.